The sequence spans 411 residues: uncharacterized protein (411 aa).

The region spanning 20-199 (FLYFDFDAFF…LPITEIPGIG (180 aa)) is the UmuC domain.

This sequence belongs to the DNA polymerase type-Y family.

This is an uncharacterized protein from Mycoplasma genitalium (strain ATCC 33530 / DSM 19775 / NCTC 10195 / G37) (Mycoplasmoides genitalium).